The chain runs to 164 residues: Sec-independent protein translocase protein TatB (164 aa).

Residues 1–21 form a helical membrane-spanning segment; that stretch reads MIDIGLSKMALIGAVALIVIG. The interval 81–102 is disordered; sequence ASEFQKDWESGTSDAAATGHDG.

This sequence belongs to the TatB family. In terms of assembly, the Tat system comprises two distinct complexes: a TatABC complex, containing multiple copies of TatA, TatB and TatC subunits, and a separate TatA complex, containing only TatA subunits. Substrates initially bind to the TatABC complex, which probably triggers association of the separate TatA complex to form the active translocon.

The protein localises to the cell inner membrane. Part of the twin-arginine translocation (Tat) system that transports large folded proteins containing a characteristic twin-arginine motif in their signal peptide across membranes. Together with TatC, TatB is part of a receptor directly interacting with Tat signal peptides. TatB may form an oligomeric binding site that transiently accommodates folded Tat precursor proteins before their translocation. This Paracidovorax citrulli (strain AAC00-1) (Acidovorax citrulli) protein is Sec-independent protein translocase protein TatB.